The chain runs to 56 residues: Small ribosomal subunit protein uS14 (56 aa).

Zn(2+) is bound by residues Cys-21, Cys-24, Cys-39, and Cys-42.

It belongs to the universal ribosomal protein uS14 family. Zinc-binding uS14 subfamily. Part of the 30S ribosomal subunit. Requires Zn(2+) as cofactor.

Binds 16S rRNA, required for the assembly of 30S particles. The sequence is that of Small ribosomal subunit protein uS14 from Methanospirillum hungatei JF-1 (strain ATCC 27890 / DSM 864 / NBRC 100397 / JF-1).